We begin with the raw amino-acid sequence, 145 residues long: Acidic phospholipase A2 homolog textilotoxin C chain (145 aa).

A signal peptide spans 1-19 (MHPAHLLVLLGVYVSLLGA). Positions 20-27 (ARIPPLPL) are excised as a propeptide. 7 disulfide bridges follow: Cys38–Cys98, Cys54–Cys144, Cys56–Cys72, Cys71–Cys125, Cys78–Cys118, Cys87–Cys111, and Cys105–Cys116.

It belongs to the phospholipase A2 family. Group I subfamily. D49 sub-subfamily. As to quaternary structure, heterohexamer. 2 forms exist: 2 A or 2 B chains, 2 C chains and 2 covalently-linked D chains, and 1 A or 1 B, 1 C, 2 covalently-linked D chains and 2 differentially glycosylated covalently-linked D chains. Textilotoxin was originally described as pentameric. As to expression, expressed by the venom gland.

The protein localises to the secreted. In terms of biological role, snake venom oligomeric phospholipase A2 that has potent presynaptic neurotoxicity. Chain C is not itself neurotoxic, but it is essential for the neurotoxicity of textilotoxin. Chain C possesses a very low phospholipase activity. This is Acidic phospholipase A2 homolog textilotoxin C chain from Pseudonaja textilis (Eastern brown snake).